Here is a 591-residue protein sequence, read N- to C-terminus: NADP-dependent malic enzyme (591 aa).

The span at Met1–Asp10 shows a compositional bias: basic and acidic residues. Residues Met1 to Gly26 are disordered. Tyr139 (proton donor) is an active-site residue. Arg192 lines the NAD(+) pocket. Catalysis depends on Lys210, which acts as the Proton acceptor. A divalent metal cation is bound by residues Glu282, Asp283, and Asp306. Asp306 serves as a coordination point for NAD(+). An NADP(+)-binding site is contributed by Leu335–Ala351. An NAD(+)-binding site is contributed by Asn447.

The protein belongs to the malic enzymes family. Homotetramer. The cofactor is Mg(2+). Mn(2+) is required as a cofactor. In terms of tissue distribution, mRNA found twofold higher in leaves and stems than in roots.

Its subcellular location is the cytoplasm. It carries out the reaction (S)-malate + NADP(+) = pyruvate + CO2 + NADPH. The enzyme catalyses oxaloacetate + H(+) = pyruvate + CO2. This Populus trichocarpa (Western balsam poplar) protein is NADP-dependent malic enzyme.